The chain runs to 273 residues: Eukaryotic translation initiation factor 3 subunit J (273 aa).

The disordered stretch occupies residues 1-158; the sequence is MPTKKWEDEE…DPSDPSKTVE (158 aa). Residues 34–54 show a composition bias toward acidic residues; the sequence is DEEANDSDVLDSWDAAEDSEV. Residues 50 to 97 adopt a coiled-coil conformation; it reads EDSEVEREKAKKAAEAKAKAEAEAKANKKTKAARINEHKQRRKEAEES. Basic and acidic residues predominate over residues 55–75; the sequence is EREKAKKAAEAKAKAEAEAKA. The span at 95-104 shows a compositional bias: acidic residues; that stretch reads EESDESDDET. A compositionally biased stretch (basic and acidic residues) spans 105 to 126; it reads ESQRRERLRRTEKEADLAHAED.

The protein belongs to the eIF-3 subunit J family. As to quaternary structure, component of the eukaryotic translation initiation factor 3 (eIF-3) complex.

The protein resides in the cytoplasm. In terms of biological role, component of the eukaryotic translation initiation factor 3 (eIF-3) complex, which is involved in protein synthesis of a specialized repertoire of mRNAs and, together with other initiation factors, stimulates binding of mRNA and methionyl-tRNAi to the 40S ribosome. The eIF-3 complex specifically targets and initiates translation of a subset of mRNAs involved in cell proliferation. The sequence is that of Eukaryotic translation initiation factor 3 subunit J from Pyricularia oryzae (strain 70-15 / ATCC MYA-4617 / FGSC 8958) (Rice blast fungus).